The chain runs to 212 residues: Probable nicotinate-nucleotide adenylyltransferase (212 aa).

This sequence belongs to the NadD family.

The catalysed reaction is nicotinate beta-D-ribonucleotide + ATP + H(+) = deamido-NAD(+) + diphosphate. Its pathway is cofactor biosynthesis; NAD(+) biosynthesis; deamido-NAD(+) from nicotinate D-ribonucleotide: step 1/1. In terms of biological role, catalyzes the reversible adenylation of nicotinate mononucleotide (NaMN) to nicotinic acid adenine dinucleotide (NaAD). The polypeptide is Probable nicotinate-nucleotide adenylyltransferase (Methylibium petroleiphilum (strain ATCC BAA-1232 / LMG 22953 / PM1)).